The primary structure comprises 398 residues: Riboflavin transporter RfnT (398 aa).

A run of 12 helical transmembrane segments spans residues 13–35 (ILTI…GGLV), 45–67 (LVTL…AAFF), 74–91 (RNAY…GVIA), 95–117 (IFAA…ASYV), 137–156 (ISWV…QLVI), 166–188 (MFAG…LFML), 220–242 (VAAG…IAMV), 252–274 (ALGI…KLIT), 281–300 (ITAL…LGGF), 305–324 (FWGA…IGAT), 345–367 (FIMF…SSGW), and 372–389 (WLVF…ILRL).

This sequence belongs to the major facilitator superfamily.

The protein localises to the cell membrane. Its function is as follows. Transports riboflavin into the cell. The chain is Riboflavin transporter RfnT from Brucella anthropi (strain ATCC 49188 / DSM 6882 / CCUG 24695 / JCM 21032 / LMG 3331 / NBRC 15819 / NCTC 12168 / Alc 37) (Ochrobactrum anthropi).